A 378-amino-acid polypeptide reads, in one-letter code: Dual-specificity RNA methyltransferase RlmN (378 aa).

The Proton acceptor role is filled by glutamate 97. The Radical SAM core domain occupies glutamate 103–aspartate 341. Residues cysteine 110 and cysteine 346 are joined by a disulfide bond. Residues cysteine 117, cysteine 121, and cysteine 124 each contribute to the [4Fe-4S] cluster site. S-adenosyl-L-methionine-binding positions include glycine 171–glutamate 172, serine 203, serine 225–histidine 227, and asparagine 303. The S-methylcysteine intermediate role is filled by cysteine 346.

Belongs to the radical SAM superfamily. RlmN family. [4Fe-4S] cluster is required as a cofactor.

It localises to the cytoplasm. It carries out the reaction adenosine(2503) in 23S rRNA + 2 reduced [2Fe-2S]-[ferredoxin] + 2 S-adenosyl-L-methionine = 2-methyladenosine(2503) in 23S rRNA + 5'-deoxyadenosine + L-methionine + 2 oxidized [2Fe-2S]-[ferredoxin] + S-adenosyl-L-homocysteine. It catalyses the reaction adenosine(37) in tRNA + 2 reduced [2Fe-2S]-[ferredoxin] + 2 S-adenosyl-L-methionine = 2-methyladenosine(37) in tRNA + 5'-deoxyadenosine + L-methionine + 2 oxidized [2Fe-2S]-[ferredoxin] + S-adenosyl-L-homocysteine. In terms of biological role, specifically methylates position 2 of adenine 2503 in 23S rRNA and position 2 of adenine 37 in tRNAs. m2A2503 modification seems to play a crucial role in the proofreading step occurring at the peptidyl transferase center and thus would serve to optimize ribosomal fidelity. The sequence is that of Dual-specificity RNA methyltransferase RlmN from Idiomarina loihiensis (strain ATCC BAA-735 / DSM 15497 / L2-TR).